A 189-amino-acid chain; its full sequence is Chitin synthase 2 (189 aa).

Belongs to the chitin synthase family. Class II subfamily.

The protein localises to the cell membrane. The enzyme catalyses [(1-&gt;4)-N-acetyl-beta-D-glucosaminyl](n) + UDP-N-acetyl-alpha-D-glucosamine = [(1-&gt;4)-N-acetyl-beta-D-glucosaminyl](n+1) + UDP + H(+). Polymerizes chitin, a structural polymer of the cell wall and septum, by transferring the sugar moiety of UDP-GlcNAc to the non-reducing end of the growing chitin polymer. This is Chitin synthase 2 (chs2) from Aspergillus niger.